A 145-amino-acid polypeptide reads, in one-letter code: Large ribosomal subunit protein uL13 (145 aa).

It belongs to the universal ribosomal protein uL13 family. In terms of assembly, part of the 50S ribosomal subunit.

In terms of biological role, this protein is one of the early assembly proteins of the 50S ribosomal subunit, although it is not seen to bind rRNA by itself. It is important during the early stages of 50S assembly. In Staphylococcus haemolyticus (strain JCSC1435), this protein is Large ribosomal subunit protein uL13.